Consider the following 594-residue polypeptide: Segmentation polarity homeobox protein engrailed (594 aa).

Disordered stretches follow at residues 1 to 64, 76 to 127, 141 to 164, 198 to 217, 231 to 299, 387 to 458, and 474 to 501; these read MALE…TRDE, IKQE…PASI, KATAEQQQQPHPQPPAIREPISPG, HYYQPSPSHPQPIVPQPQRA, ISKS…PTGS, AGTG…GSEN, and DRPSSGPRYRRTKQPKEKGDSEEKRPRT. Residues 22–60 show a composition bias toward low complexity; it reads SQSPTSTTTVTMATASPVPACTTTTTTTSTSGASAASSP. Positions 92–112 are enriched in basic residues; sequence PHHHQHPHHHQLPHHPHHQHH. Positions 151–164 are enriched in pro residues; it reads HPQPPAIREPISPG. Positions 237 to 247 are enriched in polar residues; it reads LCSSNGSSSAT. 2 stretches are compositionally biased toward low complexity: residues 278-299 and 387-402; these read ASPSSASSAMTTPVTTSSPTGS and AGTGSLNGSGSAANGA. 2 stretches are compositionally biased toward polar residues: residues 426–436 and 448–458; these read SSETNGSSSQD and ETSSTKDGSEN. Positions 487–499 are enriched in basic and acidic residues; it reads QPKEKGDSEEKRP. A DNA-binding region (homeobox) is located at residues 496–555; sequence EKRPRTAFSNAQLQRLKNEFNENRYLTEKRRQTLSAELGLNEAQIKIWFQNKRAKIKKSS.

The protein belongs to the engrailed homeobox family.

It localises to the nucleus. Its function is as follows. This protein specifies the body segmentation pattern. It is required for the development of the central nervous system. Transcriptional regulator that repress activated promoters. In Anopheles gambiae (African malaria mosquito), this protein is Segmentation polarity homeobox protein engrailed (en).